Consider the following 90-residue polypeptide: DNA-binding protein HTa (90 aa).

The protein belongs to the bacterial histone-like protein family. As to quaternary structure, homotetramer.

Histone-like DNA-binding protein which is capable of wrapping DNA to stabilize it, and thus to prevent its denaturation under extreme environmental conditions. In Thermoplasma acidophilum (strain ATCC 25905 / DSM 1728 / JCM 9062 / NBRC 15155 / AMRC-C165), this protein is DNA-binding protein HTa.